The following is a 309-amino-acid chain: Olfactory receptor 7A40 (309 aa).

The Extracellular portion of the chain corresponds to 1–26 (MELKNDTQISKFILLGISEDPLWQPF). N5 carries N-linked (GlcNAc...) asparagine glycosylation. The helical transmembrane segment at 27–47 (LFGLFLFMYLVTLLGNLLIII) threads the bilayer. At 48 to 57 (ATITDSHLHT) the chain is on the cytoplasmic side. The helical transmembrane segment at 58 to 78 (PMYFFLSNLSFADICFTSASI) threads the bilayer. Topologically, residues 79 to 97 (PKMLVNIQTKNKVITYEGC) are extracellular. Residues C97 and C179 are joined by a disulfide bond. Residues 98–118 (ISQVFFFILFGVLDNFLLAVM) form a helical membrane-spanning segment. Residues 119–139 (AYDRYVAICHPLHYMVIMNCR) lie on the Cytoplasmic side of the membrane. A helical membrane pass occupies residues 140–160 (LCGFLVLGSWVTTALNSLLQS). Over 161 to 196 (SMALRLSFCTDLKIPHFVCELNQLVLLACNDTFPND) the chain is Extracellular. The helical transmembrane segment at 197–217 (MVMYFAAILLGGGPLAGILYS) threads the bilayer. At 218 to 244 (YSKIVSSIRAISSSQGKYKAFSTCASH) the chain is on the cytoplasmic side. A helical transmembrane segment spans residues 245–265 (LSVVSLFYSTLLGVYLSSSFT). The Extracellular segment spans residues 266 to 269 (QNSH). A helical transmembrane segment spans residues 270-292 (STARASVMYSVVTPMLNPFIYSL). Topologically, residues 293–309 (RNKDLMGALRRLLRRKS) are cytoplasmic.

This sequence belongs to the G-protein coupled receptor 1 family.

The protein resides in the cell membrane. Functionally, odorant receptor. The chain is Olfactory receptor 7A40 from Mus musculus (Mouse).